The chain runs to 246 residues: tRNA pseudouridine synthase A (246 aa).

D53 (nucleophile) is an active-site residue. Y111 lines the substrate pocket.

It belongs to the tRNA pseudouridine synthase TruA family. In terms of assembly, homodimer.

The enzyme catalyses uridine(38/39/40) in tRNA = pseudouridine(38/39/40) in tRNA. Its function is as follows. Formation of pseudouridine at positions 38, 39 and 40 in the anticodon stem and loop of transfer RNAs. This Anoxybacillus flavithermus (strain DSM 21510 / WK1) protein is tRNA pseudouridine synthase A.